We begin with the raw amino-acid sequence, 501 residues long: Sucrose transport protein SUT2 (501 aa).

At 1-31 (MPRRPSGGGGGAGPAAAAVRKVPLRKLLRAA) the chain is on the cytoplasmic side. The helical transmembrane segment at 32–52 (SVACGVQFGWALQLSLLTPYV) threads the bilayer. Residues 53-55 (QEL) lie on the Extracellular side of the membrane. Residues 56 to 76 (GIPHAFASLVWLCGPLSGLLV) traverse the membrane as a helical segment. The Cytoplasmic segment spans residues 77 to 98 (QPLVGHLSDRIAPAASPLGRRR). Residues 99–119 (PFIAAGAASIAAAVLTVGFSA) form a helical membrane-spanning segment. Residues 120 to 135 (DLGRIFGDSITPGSTR) lie on the Extracellular side of the membrane. A helical transmembrane segment spans residues 136-156 (LGAIIVYLVGFWLLDVGNNAT). Residues 157–176 (QGPCRAFLADLTENDPRRTR) lie on the Cytoplasmic side of the membrane. The helical transmembrane segment at 177 to 197 (IANAYFSLFMALGNILGYATG) threads the bilayer. Topologically, residues 198–222 (AYSGWYKIFPFTVTPSCSISCANLK) are extracellular. The helical transmembrane segment at 223–243 (SAFLLDIIILVVTTCITVASV) threads the bilayer. The Cytoplasmic portion of the chain corresponds to 244–278 (QEPQSFGSDEADHPSTEQEAFLWELFGSFRYFTLP). Residues 279 to 299 (VWMVLIVTALTWIGWFPFILF) traverse the membrane as a helical segment. Topologically, residues 300 to 327 (DTDWMGREIYRGSPDDPSITQSYHDGVR) are extracellular. A helical transmembrane segment spans residues 328–348 (MGSFGLMLNSVLLGFTSIVLE). Over 349-356 (KLCRKWGA) the chain is Cytoplasmic. A helical transmembrane segment spans residues 357 to 377 (GLVWGVSNILMALCFVAMLVI). Topologically, residues 378 to 394 (TYVAKNMDYPPSGVPPT) are extracellular. Residues 395 to 415 (GIVIASLVVFTILGAPLAITY) form a helical membrane-spanning segment. Over 416–433 (SIPYAMAASRVENLGLGQ) the chain is Cytoplasmic. Residues 434–454 (GLAMGILNLAIVIPQVIVSLG) form a helical membrane-spanning segment. At 455–467 (SGPWDQLFGGGNA) the chain is on the extracellular side. A helical membrane pass occupies residues 468 to 488 (PAFAVAAAASFIGGLVAILGL). Topologically, residues 489 to 501 (PRARIASRRRGHR) are cytoplasmic.

Belongs to the glycoside-pentoside-hexuronide (GPH) cation symporter transporter (TC 2.A.2.4) family. As to quaternary structure, homodimer. As to expression, widely expressed.

The protein localises to the cell membrane. It participates in glycan biosynthesis; sucrose metabolism. Functionally, responsible for the transport of sucrose into the cell, with the concomitant uptake of protons (symport system). May also transport other glucosides. The sequence is that of Sucrose transport protein SUT2 (SUT2) from Oryza sativa subsp. japonica (Rice).